We begin with the raw amino-acid sequence, 156 residues long: 3-hydroxyacyl-[acyl-carrier-protein] dehydratase FabZ (156 aa).

His50 is a catalytic residue.

The protein belongs to the thioester dehydratase family. FabZ subfamily.

Its subcellular location is the cytoplasm. It catalyses the reaction a (3R)-hydroxyacyl-[ACP] = a (2E)-enoyl-[ACP] + H2O. In terms of biological role, involved in unsaturated fatty acids biosynthesis. Catalyzes the dehydration of short chain beta-hydroxyacyl-ACPs and long chain saturated and unsaturated beta-hydroxyacyl-ACPs. The polypeptide is 3-hydroxyacyl-[acyl-carrier-protein] dehydratase FabZ (Janthinobacterium sp. (strain Marseille) (Minibacterium massiliensis)).